A 602-amino-acid polypeptide reads, in one-letter code: Glutaminase liver isoform, mitochondrial (602 aa).

The transit peptide at 1-14 (MRSMRALQNALSRA) directs the protein to the mitochondrion. Disordered regions lie at residues 1-28 (MRSMRALQNALSRAGSHGQRGGWGHPSR) and 46-67 (QGRGTPHSHQPQHSDHDASNSG). Ser-219 contributes to the substrate binding site. Lys-253 bears the N6-succinyllysine mark. Asn-268 serves as a coordination point for substrate. Lys-279 and Lys-284 each carry N6-acetyllysine. Positions 314 and 321 each coordinate substrate. Lys-329 carries the post-translational modification N6-acetyllysine. Residues Tyr-347, Tyr-399, and Val-417 each contribute to the substrate site. ANK repeat units follow at residues 518–551 (DSRTALHVAAAEGHIDVVKFLIEACKVNPFVKDR) and 552–585 (WGNIPLDDAVQFNHLEVVKLLQDYHDSYMLSETQ).

It belongs to the glutaminase family. Homotetramer, dimer of dimers. Does not assemble into higher oligomers. Interacts with the PDZ domain of the syntrophin SNTA1. Interacts with the PDZ domain of TAX1BP3. In terms of tissue distribution, liver specific.

It is found in the mitochondrion. It catalyses the reaction L-glutamine + H2O = L-glutamate + NH4(+). Its function is as follows. Plays an important role in the regulation of glutamine catabolism. Promotes mitochondrial respiration and increases ATP generation in cells by catalyzing the synthesis of glutamate and alpha-ketoglutarate. Increases cellular anti-oxidant function via NADH and glutathione production. May play a role in preventing tumor proliferation. The sequence is that of Glutaminase liver isoform, mitochondrial (Gls2) from Rattus norvegicus (Rat).